The following is a 522-amino-acid chain: Glutamate--cysteine ligase, chloroplastic (522 aa).

2 cysteine pairs are disulfide-bonded: Cys-186-Cys-406 and Cys-349-Cys-364.

This sequence belongs to the carboxylate-amine ligase family. Glutamate--cysteine ligase type 2 subfamily. In terms of assembly, homodimer or monomer when oxidized or reduced, respectively. Post-translationally, the Cys-186-Cys-406 disulfide bridge is known to modulate the enzyme activity according to the redox status. The oxidized form constitutes the active enzyme. As to expression, abundant in leaves and roots. Expressed to a high level in leaf trichomes of mature plant.

Its subcellular location is the plastid. It is found in the chloroplast. The catalysed reaction is L-cysteine + L-glutamate + ATP = gamma-L-glutamyl-L-cysteine + ADP + phosphate + H(+). It functions in the pathway sulfur metabolism; glutathione biosynthesis; glutathione from L-cysteine and L-glutamate: step 1/2. Feedback inhibition by glutathione. Inhibited by buthionine sulfoximine and cystamine. In terms of biological role, seems to play an important role in controlling the expression of resistance responses like the regulation of salicylic acid (SA) and phytoalexin (camalexin) production. Involved in resistance to fungal and bacterial pathogens. Required for the regulation of cell proliferation in root apical meristems through the GSH-dependent developmental pathway. Also participates in the detoxification process, the antioxidant response and is essential for embryo development and proper seed maturation. In Arabidopsis thaliana (Mouse-ear cress), this protein is Glutamate--cysteine ligase, chloroplastic (GSH1).